A 290-amino-acid chain; its full sequence is Cbb3-type cytochrome c oxidase subunit CcoP (290 aa).

Positions 1–22 are disordered; that stretch reads MSVKPTKQKPGEPPTTGHSWDG. Over 1–37 the chain is Cytoplasmic; the sequence is MSVKPTKQKPGEPPTTGHSWDGIEEFDNPMPRWWLWT. A helical transmembrane segment spans residues 38–58; sequence FYVTIVWAIGYSILYPAWPLI. Over 59 to 290 the chain is Periplasmic; the sequence is NGATNGLIGH…VYVHGLGGGE (232 aa). Cytochrome c domains are found at residues 109–199 and 206–287; these read YATN…LQIS and ALSA…HGLG. Positions 122, 125, 126, 174, 219, 222, 223, and 264 each coordinate heme c.

The protein belongs to the CcoP / FixP family. As to quaternary structure, component of the cbb3-type cytochrome c oxidase at least composed of CcoN, CcoO, CcoQ and CcoP. Heme c is required as a cofactor.

It localises to the cell inner membrane. It participates in energy metabolism; oxidative phosphorylation. Functionally, C-type cytochrome. Part of the cbb3-type cytochrome c oxidase complex. CcoP subunit is required for transferring electrons from donor cytochrome c via its heme groups to CcoO subunit. From there, electrons are shuttled to the catalytic binuclear center of CcoN subunit where oxygen reduction takes place. The complex also functions as a proton pump. In Cereibacter sphaeroides (strain ATCC 17023 / DSM 158 / JCM 6121 / CCUG 31486 / LMG 2827 / NBRC 12203 / NCIMB 8253 / ATH 2.4.1.) (Rhodobacter sphaeroides), this protein is Cbb3-type cytochrome c oxidase subunit CcoP.